The following is a 295-amino-acid chain: Elongation factor Ts (295 aa).

Positions 79–82 are involved in Mg(2+) ion dislocation from EF-Tu; sequence TDFV.

The protein belongs to the EF-Ts family.

Its subcellular location is the cytoplasm. Functionally, associates with the EF-Tu.GDP complex and induces the exchange of GDP to GTP. It remains bound to the aminoacyl-tRNA.EF-Tu.GTP complex up to the GTP hydrolysis stage on the ribosome. In Bacillus cytotoxicus (strain DSM 22905 / CIP 110041 / 391-98 / NVH 391-98), this protein is Elongation factor Ts.